Here is a 341-residue protein sequence, read N- to C-terminus: L-threonine 3-dehydrogenase (341 aa).

Residue cysteine 38 coordinates Zn(2+). Active-site charge relay system residues include threonine 40 and histidine 43. Zn(2+)-binding residues include histidine 63, glutamate 64, cysteine 93, cysteine 96, cysteine 99, and cysteine 107. NAD(+) contacts are provided by residues isoleucine 175, aspartate 195, arginine 200, 262–264 (LGI), and 286–287 (IY).

It belongs to the zinc-containing alcohol dehydrogenase family. In terms of assembly, homotetramer. It depends on Zn(2+) as a cofactor.

It is found in the cytoplasm. The enzyme catalyses L-threonine + NAD(+) = (2S)-2-amino-3-oxobutanoate + NADH + H(+). It participates in amino-acid degradation; L-threonine degradation via oxydo-reductase pathway; glycine from L-threonine: step 1/2. In terms of biological role, catalyzes the NAD(+)-dependent oxidation of L-threonine to 2-amino-3-ketobutyrate. In Salmonella choleraesuis (strain SC-B67), this protein is L-threonine 3-dehydrogenase.